The sequence spans 217 residues: Glycine betaine/carnitine/choline transport system permease protein OpuCB (217 aa).

The 180-residue stretch at 19-198 folds into the ABC transmembrane type-1 domain; sequence TGEHLYISLI…ILAIIIDYVL (180 aa). 6 helical membrane passes run 23–43, 52–74, 84–101, 128–148, 150–170, and 180–200; these read LYISLIAVVLGIIVAVPLGVA, GAVIGFVNIVQTLPSLAILAFFI, AIVALFFYSVLPILRNTY, LVEIPLAIPIIMAGIRTSTIY, IGWATLASFIGGGGLGDYIFI, and IIGGAVPVTILAIIIDYVLAV.

This sequence belongs to the binding-protein-dependent transport system permease family. CysTW subfamily. In terms of assembly, the complex is composed of two ATP-binding proteins (OpuCA), two transmembrane proteins (OpuCB and OpuCD) and a solute-binding protein (OpuCC).

Its subcellular location is the cell membrane. In terms of biological role, involved in a high affinity multicomponent binding-protein-dependent transport system for glycine betaine, carnitine and choline; probably responsible for the translocation of the substrate across the membrane. The protein is Glycine betaine/carnitine/choline transport system permease protein OpuCB (opuCB) of Bacillus subtilis (strain 168).